Here is an 879-residue protein sequence, read N- to C-terminus: MAGGGGDLSTRRLNECISPVANEMNHLPAHSHDLQRMFTEDQGVDDRLLYDIVFKHFKRNKVEISNAIKKTFPFLEGLRDRDLITNKMFEDSQDSCRNLVPVQRVVYNVLSELEKTFNLPVLEALFSDVNMQEYPDLIHIYKGFENVIHDKLPLQESEEEEREERSGLQLSLEQGTGENSFRSLTWPPSGSPSHAGTTPPENGLSEHPCETEQINAKRKDTTSDKDDSLGSQQTNEQCAQKAEPTESCEQIAVQVNNGDAGREMPCPLPCDEESPEAELHNHGIQINSCSVRLVDIKKEKPFSNSKVECQAQARTHHNQASDIIVISSEDSEGSTDVDEPLEVFISAPRSEPVINNDNPLESNDEKEGQEATCSRPQIVPEPMDFRKLSTFRESFKKRVIGQDHDFSESSEEEAPAEASSGALRSKHGEKAPMTSRSTSTWRIPSRKRRFSSSDFSDLSNGEELQETCSSSLRRGSGSQPQEPENKKCSCVMCFPKGVPRSQEARTESSQASDMMDTMDVENNSTLEKHSGKRRKKRRHRSKVNGLQRGRKKDRPRKHLTLNNKVQKKRWQQRGRKANTRPLKRRRKRGPRIPKDENINFKQSELPVTCGEVKGTLYKERFKQGTSKKCIQSEDKKWFTPREFEIEGDRGASKNWKLSIRCGGYTLKVLMENKFLPEPPSTRKKRILESHNNTLVDPCEEHKKKNPDASVKFSEFLKKCSETWKTIFAKEKGKFEDMAKADKAHYEREMKTYIPPKGEKKKKFKDPNAPKRPPLAFFLFCSEYRPKIKGEHPGLSIDDVVKKLAGMWNNTAAADKQFYEKKAAKLKEKYKKDIAAYRAKGKPNSAKKRVVKAEKSKKKKEEEEDEEDEQEEENEEDDDK.

Alanine 2 carries the post-translational modification N-acetylalanine. Residue serine 18 is modified to Phosphoserine. The region spanning 33-149 (DLQRMFTEDQ…IYKGFENVIH (117 aa)) is the HSR domain. Residues 154-245 (LQESEEEERE…EQCAQKAEPT (92 aa)) are disordered. Serine 157 carries the phosphoserine modification. Positions 165-168 (RSGL) match the D-box; recognition signal for CDC20-mediated degradation motif. 3 positions are modified to phosphoserine: serine 171, serine 180, and serine 228. The segment covering 176 to 200 (TGENSFRSLTWPPSGSPSHAGTTPP) has biased composition (polar residues). Basic and acidic residues predominate over residues 207–228 (HPCETEQINAKRKDTTSDKDDS). Residues 229–238 (LGSQQTNEQC) are compositionally biased toward polar residues. Lysine 241 is covalently cross-linked (Glycyl lysine isopeptide (Lys-Gly) (interchain with G-Cter in SUMO2)). The PxVxL motif signature appears at 284 to 297 (IQINSCSVRLVDIK). Lysine 297 is covalently cross-linked (Glycyl lysine isopeptide (Lys-Gly) (interchain with G-Cter in SUMO)). Residues lysine 300 and lysine 306 each participate in a glycyl lysine isopeptide (Lys-Gly) (interchain with G-Cter in SUMO2) cross-link. Phosphoserine is present on residues serine 331 and serine 362. Residues 333 to 478 (GSTDVDEPLE…SSSLRRGSGS (146 aa)) form a sufficient to mediate interaction with ETS1 region. Positions 345-386 (ISAPRSEPVINNDNPLESNDEKEGQEATCSRPQIVPEPMDFR) are disordered. Residues lysine 366 and lysine 387 each participate in a glycyl lysine isopeptide (Lys-Gly) (interchain with G-Cter in SUMO2) cross-link. Phosphoserine occurs at positions 394, 407, 409, 410, and 451. The interval 401–596 (GQDHDFSESS…KRGPRIPKDE (196 aa)) is disordered. Polar residues predominate over residues 466–482 (ETCSSSLRRGSGSQPQE). The segment covering 530 to 591 (SGKRRKKRRH…LKRRRKRGPR (62 aa)) has biased composition (basic residues). Short sequence motifs (nuclear localization signal) lie at residues 536–553 (KRRH…RKKD) and 568–592 (KRWQ…GPRI). Lysine 594 participates in a covalent cross-link: Glycyl lysine isopeptide (Lys-Gly) (interchain with G-Cter in SUMO2). Residues 595–676 (DENINFKQSE…KVLMENKFLP (82 aa)) enclose the SAND domain. 2 consecutive DNA-binding regions (HMG box) follow at residues 677–753 (EPPS…KTYI) and 769–837 (PKRP…AAYR). The Nuclear localization signal motif lies at 717 to 734 (KKCSETWKTIFAKEKGKF). The interval 835-879 (AYRAKGKPNSAKKRVVKAEKSKKKKEEEEDEEDEQEEENEEDDDK) is disordered. The span at 838–857 (AKGKPNSAKKRVVKAEKSKK) shows a compositional bias: basic residues. Positions 861-879 (EEEDEEDEQEEENEEDDDK) are enriched in acidic residues.

In terms of assembly, homodimer; isoforms are able to heterodimerize. Interacts with members of the HP1 family of nonhistone chromosomal protein, such as CBX5 and CBX3 via the PxVxL motif. Interacts with ETS1; the interaction is direct and modulates ETS1 transcriptional activity. Interacts with the MRN complex which is composed of two heterodimers RAD50/MRE11 associated with a single NBN; recruits the complex to PML-related bodies. Interacts with HIPK2; positively regulates TP53-dependent transcription. Interacts with CASP8AP2; may negatively regulate CASP8AP2 export from the nucleus to the cytoplasm. Interacts with SUMO1P1/SUMO5. (Microbial infection) Interacts with Epstein-Barr virus EBNA-LP; this interaction is important for EBNA-LP coactivator activity. As to quaternary structure, (Microbial infection) Interacts with human cytomegalovirus/HHV-5 protein UL123; may play a role in infection by the virus. Sumoylated. Sumoylation depends on a functional nuclear localization signal but is not necessary for nuclear import or nuclear body targeting. Post-translationally, sumoylated. Sumoylated with SUMO1. Sumoylation depends on a functional nuclear localization signal but is not necessary for nuclear import or nuclear body targeting. Sumoylation may stabilize the interaction with CBX5. In terms of processing, (Microbial infection) Immediate early protein IE1 of human cytomegalovirus (HHV-5) interferes with the sumoylation of SP100. As to expression, widely expressed. Sp100-B is expressed only in spleen, tonsil, thymus, mature B-cell line and some T-cell line, but not in brain, liver, muscle or non-lymphoid cell lines.

The protein localises to the nucleus. The protein resides in the PML body. It localises to the nuclear body. Its subcellular location is the cytoplasm. Functionally, together with PML, this tumor suppressor is a major constituent of the PML bodies, a subnuclear organelle involved in a large number of physiological processes including cell growth, differentiation and apoptosis. Functions as a transcriptional coactivator of ETS1 and ETS2 according to PubMed:11909962. Under certain conditions, it may also act as a corepressor of ETS1 preventing its binding to DNA according to PubMed:15247905. Through the regulation of ETS1 it may play a role in angiogenesis, controlling endothelial cell motility and invasion. Through interaction with the MRN complex it may be involved in the regulation of telomeres lengthening. May also regulate TP53-mediated transcription and through CASP8AP2, regulate FAS-mediated apoptosis. Also plays a role in infection by viruses, including human cytomegalovirus and Epstein-Barr virus, through mechanisms that may involve chromatin and/or transcriptional regulation. The chain is Nuclear autoantigen Sp-100 (SP100) from Homo sapiens (Human).